Consider the following 353-residue polypeptide: Photosystem II D2 protein (353 aa).

T2 bears the N-acetylthreonine mark. T2 carries the phosphothreonine modification. A helical membrane pass occupies residues 41–61 (CAYFALGGWFTGTTFVTSWYT). Position 118 (H118) interacts with chlorophyll a. A helical transmembrane segment spans residues 125 to 141 (GFMLRQFELARSVQLRP). Q130 and N143 together coordinate pheophytin a. A helical membrane pass occupies residues 153-166 (VFVSVFLIYPLGQS). H198 contacts chlorophyll a. A helical transmembrane segment spans residues 208-228 (AALLCAIHGATVENTLFEDGD). Residues H215 and F262 each contribute to the a plastoquinone site. H215 is a Fe cation binding site. Residue H269 participates in Fe cation binding. The chain crosses the membrane as a helical span at residues 279-295 (GLWMSAIGVVGLALNLR).

This sequence belongs to the reaction center PufL/M/PsbA/D family. PSII is composed of 1 copy each of membrane proteins PsbA, PsbB, PsbC, PsbD, PsbE, PsbF, PsbH, PsbI, PsbJ, PsbK, PsbL, PsbM, PsbT, PsbX, PsbY, PsbZ, Psb30/Ycf12, at least 3 peripheral proteins of the oxygen-evolving complex and a large number of cofactors. It forms dimeric complexes. It depends on The D1/D2 heterodimer binds P680, chlorophylls that are the primary electron donor of PSII, and subsequent electron acceptors. It shares a non-heme iron and each subunit binds pheophytin, quinone, additional chlorophylls, carotenoids and lipids. There is also a Cl(-1) ion associated with D1 and D2, which is required for oxygen evolution. The PSII complex binds additional chlorophylls, carotenoids and specific lipids. as a cofactor.

The protein resides in the plastid. It is found in the chloroplast thylakoid membrane. The enzyme catalyses 2 a plastoquinone + 4 hnu + 2 H2O = 2 a plastoquinol + O2. Photosystem II (PSII) is a light-driven water:plastoquinone oxidoreductase that uses light energy to abstract electrons from H(2)O, generating O(2) and a proton gradient subsequently used for ATP formation. It consists of a core antenna complex that captures photons, and an electron transfer chain that converts photonic excitation into a charge separation. The D1/D2 (PsbA/PsbD) reaction center heterodimer binds P680, the primary electron donor of PSII as well as several subsequent electron acceptors. D2 is needed for assembly of a stable PSII complex. This chain is Photosystem II D2 protein, found in Liriodendron tulipifera (Tuliptree).